We begin with the raw amino-acid sequence, 821 residues long: DNA ligase (821 aa).

Residues 33-37 (DVDYD), 82-83 (SL), and glutamate 113 contribute to the NAD(+) site. The N6-AMP-lysine intermediate role is filled by lysine 115. Positions 136, 173, 290, and 314 each coordinate NAD(+). Cysteine 408, cysteine 411, cysteine 426, and cysteine 432 together coordinate Zn(2+). Positions 741 to 821 (IVAGPLDGQT…RLLAYLAEHE (81 aa)) constitute a BRCT domain.

Belongs to the NAD-dependent DNA ligase family. LigA subfamily. Mg(2+) is required as a cofactor. Mn(2+) serves as cofactor.

It catalyses the reaction NAD(+) + (deoxyribonucleotide)n-3'-hydroxyl + 5'-phospho-(deoxyribonucleotide)m = (deoxyribonucleotide)n+m + AMP + beta-nicotinamide D-nucleotide.. DNA ligase that catalyzes the formation of phosphodiester linkages between 5'-phosphoryl and 3'-hydroxyl groups in double-stranded DNA using NAD as a coenzyme and as the energy source for the reaction. It is essential for DNA replication and repair of damaged DNA. The protein is DNA ligase of Stenotrophomonas maltophilia (strain R551-3).